A 181-amino-acid polypeptide reads, in one-letter code: ATP synthase subunit b 2 (181 aa).

Over residues 1 to 18 the composition is skewed to low complexity; it reads MATTTHDAGHGAAEAAHG. Positions 1–20 are disordered; the sequence is MATTTHDAGHGAAEAAHGSS. A helical membrane pass occupies residues 34 to 54; sequence IFWLLVTLVVIYLILSRIALP.

Belongs to the ATPase B chain family. In terms of assembly, F-type ATPases have 2 components, F(1) - the catalytic core - and F(0) - the membrane proton channel. F(1) has five subunits: alpha(3), beta(3), gamma(1), delta(1), epsilon(1). F(0) has three main subunits: a(1), b(2) and c(10-14). The alpha and beta chains form an alternating ring which encloses part of the gamma chain. F(1) is attached to F(0) by a central stalk formed by the gamma and epsilon chains, while a peripheral stalk is formed by the delta and b chains.

It is found in the cell inner membrane. In terms of biological role, f(1)F(0) ATP synthase produces ATP from ADP in the presence of a proton or sodium gradient. F-type ATPases consist of two structural domains, F(1) containing the extramembraneous catalytic core and F(0) containing the membrane proton channel, linked together by a central stalk and a peripheral stalk. During catalysis, ATP synthesis in the catalytic domain of F(1) is coupled via a rotary mechanism of the central stalk subunits to proton translocation. Functionally, component of the F(0) channel, it forms part of the peripheral stalk, linking F(1) to F(0). The b'-subunit is a diverged and duplicated form of b found in plants and photosynthetic bacteria. This chain is ATP synthase subunit b 2 (atpF2), found in Ruegeria sp. (strain TM1040) (Silicibacter sp.).